We begin with the raw amino-acid sequence, 96 residues long: Putative pterin-4-alpha-carbinolamine dehydratase (96 aa).

It belongs to the pterin-4-alpha-carbinolamine dehydratase family.

It carries out the reaction (4aS,6R)-4a-hydroxy-L-erythro-5,6,7,8-tetrahydrobiopterin = (6R)-L-erythro-6,7-dihydrobiopterin + H2O. In Paraburkholderia xenovorans (strain LB400), this protein is Putative pterin-4-alpha-carbinolamine dehydratase.